Reading from the N-terminus, the 158-residue chain is Large ribosomal subunit protein uL16 (158 aa).

This sequence belongs to the universal ribosomal protein uL16 family. In terms of assembly, part of the 50S ribosomal subunit.

Binds 23S rRNA and is also seen to make contacts with the A and possibly P site tRNAs. In Parasynechococcus marenigrum (strain WH8102), this protein is Large ribosomal subunit protein uL16.